Here is a 77-residue protein sequence, read N- to C-terminus: Putative antitoxin VapB24 (77 aa).

Functionally, possibly the antitoxin component of a type II toxin-antitoxin (TA) system. Its cognate toxin is VapC24 (Potential). The polypeptide is Putative antitoxin VapB24 (vapB24) (Mycobacterium tuberculosis (strain CDC 1551 / Oshkosh)).